The primary structure comprises 488 residues: Protein Notchless (488 aa).

A disordered region spans residues 1-22 (MLAKKQKMQETDTEQEATPHTI). The ubiquitin-like (UBL) domain stretch occupies residues 19–101 (PHTIQARLVS…VIDIVYQPQA (83 aa)). WD repeat units lie at residues 117-156 (GHAE…PHFT), 159-198 (GHKQ…QKGR), 202-246 (GHKK…CLMN), 249-287 (GHTN…LCRT), 329-370 (LQES…CVER), 373-412 (GHQN…YMAT), 415-454 (GHVQ…LAQE), and 457-488 (GHAD…LWAY).

This sequence belongs to the NLE1/RSA4 family. Interacts with Notch (via cytoplasmic domain). Associates with the pre-60S ribosomal particle.

The protein resides in the nucleus. The protein localises to the nucleolus. Plays a role in regulating Notch activity. This is Protein Notchless from Drosophila melanogaster (Fruit fly).